The sequence spans 226 residues: 7-cyano-7-deazaguanine synthase (226 aa).

ATP is bound at residue 10-20 (FSGGQDSTTLA). C190, C205, C208, and C211 together coordinate Zn(2+).

The protein belongs to the QueC family. It depends on Zn(2+) as a cofactor.

It catalyses the reaction 7-carboxy-7-deazaguanine + NH4(+) + ATP = 7-cyano-7-deazaguanine + ADP + phosphate + H2O + H(+). It functions in the pathway purine metabolism; 7-cyano-7-deazaguanine biosynthesis. In terms of biological role, catalyzes the ATP-dependent conversion of 7-carboxy-7-deazaguanine (CDG) to 7-cyano-7-deazaguanine (preQ(0)). The chain is 7-cyano-7-deazaguanine synthase from Helicobacter pylori (strain Shi470).